A 118-amino-acid polypeptide reads, in one-letter code: Autophagy-related protein 8 (118 aa).

A lipid anchor (Phosphatidylethanolamine amidated glycine) is attached at Gly-116. A propeptide spans 117 to 118 (removed in mature form); it reads EA.

It belongs to the ATG8 family. Conjugation to phosphatidylethanolamine (PE) leads to homodimerization. Interacts with ATG1, ATG3, ATG4, ATG7 and ATG12. The C-terminal Glu-117 and Ala-118 residues of ATG8 are removed by ATG4 to expose Gly-116 at the C-terminus. This Gly-116 forms then a thioester bond with the 'Cys-550' of ATG7 (E1-like activating enzyme) before being transferred to the 'Cys-244' of ATG3 (the specific E2 conjugating enzyme), in order to be finally amidated with phosphatidylethanolamine. This lipid modification anchors ATG8 to membranes and can be reversed by ATG4, releasing soluble ATG8.

It localises to the cytoplasmic vesicle. The protein resides in the cvt vesicle membrane. Its subcellular location is the autophagosome membrane. The protein localises to the vacuole membrane. Functionally, ubiquitin-like modifier involved in cytoplasm to vacuole transport (Cvt) vesicles and autophagosome formation. With ATG4, mediates the delivery of the vesicles and autophagosomes to the vacuole via the microtubule cytoskeleton. Required for selective autophagic degradation of the nucleus (nucleophagy) as well as for mitophagy which contributes to regulate mitochondrial quantity and quality by eliminating the mitochondria to a basal level to fulfill cellular energy requirements and preventing excess ROS production. Also participates in membrane fusion events that take place in the early secretory pathway. Also involved in endoplasmic reticulum-specific autophagic process and is essential for the survival of cells subjected to severe ER stress. The ATG8-PE conjugate mediates tethering between adjacent membranes and stimulates membrane hemifusion, leading to expansion of the autophagosomal membrane during autophagy. Moreover not only conjugation, but also subsequent ATG8-PE deconjugation is an important step required to facilitate multiple events during macroautophagy, and especially for efficient autophagosome biogenesis, the assembly of ATG9-containing tubulovesicular clusters into phagophores/autophagosomes, and for the disassembly of PAS-associated ATG components. Autophagy is required for proper vegetative growth, asexual/sexual reproduction, and full virulence. Autophagy is particularly involved in the biosynthesis of deoxynivalenol (DON), an important virulence determinant. The protein is Autophagy-related protein 8 of Gibberella zeae (strain ATCC MYA-4620 / CBS 123657 / FGSC 9075 / NRRL 31084 / PH-1) (Wheat head blight fungus).